The primary structure comprises 194 residues: DPY30 domain-containing protein 2 (194 aa).

The tract at residues 126 to 172 (EAFEKEPLKQESLPGTSDMIPGMPQQSPSSEPSVSSQVDLNTGTPQE) is disordered. The segment covering 149-163 (PQQSPSSEPSVSSQV) has biased composition (low complexity).

It belongs to the dpy-30 family.

The sequence is that of DPY30 domain-containing protein 2 (DYDC2) from Bos taurus (Bovine).